We begin with the raw amino-acid sequence, 312 residues long: Zinc-finger homeodomain protein 9 (312 aa).

The tract at residues 1-27 (MLEVRSMDMTPKSPEPESETPTRIQPA) is disordered. Position 13 is a phosphoserine (Ser13). A ZF-HD dimerization-type; degenerate zinc finger spans residues 52-103 (YKECLKNHAAAIGGHALDGCGEFMPSPSSTPSDPTSLKCAACGCHRNFHRRE). 2 disordered regions span residues 128–155 (QPHH…PPPI) and 253–312 (FSGG…SSSS). A compositionally biased stretch (pro residues) spans 136–155 (PPPLAPPLPRSPNSSSPPPI). Residues 192-255 (RKRFRTKFSS…NNKNSFKFSG (64 aa)) constitute a DNA-binding region (homeobox). Phosphoserine is present on Ser273.

In terms of assembly, homo- and heterodimer with other ZFHD proteins. Interacts with MIF3; this interaction prevents nuclear localization and DNA-binding to inhibit transcription regulation activity. Binds to ZHD1, ZHD2 and ZHD11. In terms of tissue distribution, mostly expressed in flowers, stems and inflorescence and, to a lower extent, in leaves and stems.

Its subcellular location is the nucleus. In terms of biological role, putative transcription factor. In Arabidopsis thaliana (Mouse-ear cress), this protein is Zinc-finger homeodomain protein 9 (ZHD9).